Reading from the N-terminus, the 160-residue chain is Major strawberry allergen Fra a 1-2 (160 aa).

Belongs to the BetVI family. Monomer. Interacts with AP. As to expression, highly expressed in ripe red fruits. Expressed in roots and white fruits. Expressed at low levels in open flowers.

Functionally, involved in the control of flavonoid biosynthesis in fruits, probably by binding directly to natural flavonoids. Binds the natural flavonoid myricetin with affinities in the low micromolar range. The chain is Major strawberry allergen Fra a 1-2 from Fragaria ananassa (Strawberry).